Here is a 311-residue protein sequence, read N- to C-terminus: Avirulence protein ATR1 (311 aa).

The signal sequence occupies residues 1-15 (MRVCYFVLVPSVALA). The short motif at 48–62 (RALRAQTALDDDEER) is the RxLR-dEER element. 2 WY domain regions span residues 127 to 209 (DEAL…VKCV) and 210 to 311 (ESED…IYSV).

It belongs to the RxLR effector family. Monomer. Interacts with defense protein RPP1 from several ecotypes including RPP1-NdA, RPP1-WsB, RPP1-EstA and RPP1-ZdrA, via their leucine-rich repeats (LLRs).

Its subcellular location is the secreted. It localises to the host cytoplasm. In terms of biological role, secreted effector that acts as an elicitor of hypersensitive response (HR) specifically on plants carrying both defense protein RPP1 from several ecotypes including RPP1-NdA, RPP1-WsB, RPP1-EstA and RPP1-ZdrA. In Hyaloperonospora arabidopsidis (strain Emoy2) (Downy mildew agent), this protein is Avirulence protein ATR1.